Here is a 300-residue protein sequence, read N- to C-terminus: Ribosomal protein L11 methyltransferase (300 aa).

The S-adenosyl-L-methionine site is built by Thr-152, Gly-173, Asp-195, and Asn-234.

This sequence belongs to the methyltransferase superfamily. PrmA family.

It is found in the cytoplasm. The catalysed reaction is L-lysyl-[protein] + 3 S-adenosyl-L-methionine = N(6),N(6),N(6)-trimethyl-L-lysyl-[protein] + 3 S-adenosyl-L-homocysteine + 3 H(+). Methylates ribosomal protein L11. The protein is Ribosomal protein L11 methyltransferase of Paraburkholderia phytofirmans (strain DSM 17436 / LMG 22146 / PsJN) (Burkholderia phytofirmans).